The following is a 20-amino-acid chain: Putative 60 kDa spermidine-binding protein (20 aa).

The disordered stretch occupies residues Ser1–Glu20. A compositionally biased stretch (polar residues) spans Glu10–Glu20.

In terms of assembly, dimer of 18 kDa and 60 kDa subunit.

The protein localises to the microsome membrane. It is found in the endoplasmic reticulum membrane. In terms of biological role, may have spermidine-binding activity. The polypeptide is Putative 60 kDa spermidine-binding protein (Zea mays (Maize)).